Here is a 623-residue protein sequence, read N- to C-terminus: Chaperone protein DnaK (623 aa).

Phosphothreonine; by autocatalysis is present on T197. The interval 600-623 (KKDENAGANGGNKKDDDVIDAEVE) is disordered.

It belongs to the heat shock protein 70 family.

Functionally, acts as a chaperone. The protein is Chaperone protein DnaK of Campylobacter concisus (strain 13826).